The following is a 358-amino-acid chain: Probable G-protein coupled receptor 25 (358 aa).

At 1-43 the chain is on the extracellular side; that stretch reads MQSTEPWSPSWGTLSWDYSGSGSLDQVELCPAWNLPYGHAIIP. A helical membrane pass occupies residues 44-64; that stretch reads ALYLAAFAVGLPGNAFVVWLL. At 65 to 76 the chain is on the cytoplasmic side; the sequence is SRQRGPRRLVDT. A helical membrane pass occupies residues 77–97; it reads FVLHLAAADLGFVLTLPLWAA. At 98 to 113 the chain is on the extracellular side; it reads AEARGGLWPFGDGLCK. C112 and C191 are joined by a disulfide. A helical transmembrane segment spans residues 114 to 134; sequence VSSFALAVTRCAGALLLAGMS. Topologically, residues 135–155 are cytoplasmic; that stretch reads VDRYLAVGRPLSARPLRSARC. A helical transmembrane segment spans residues 156–176; that stretch reads VRAVCGAAWAAAFLAGLPALL. At 177–200 the chain is on the extracellular side; sequence YRGLQPSLDGVGSQCAEEPWEALQ. A helical transmembrane segment spans residues 201 to 221; sequence GVGLLLLLLTFALPLAVTLIC. The Cytoplasmic segment spans residues 222–239; it reads YWRVSRRLPRVGRARSNS. A helical membrane pass occupies residues 240–260; the sequence is LRIIFTVESVFVGCWLPFGVL. Topologically, residues 261–284 are extracellular; it reads RSLFHLARLQALPLPCSLLLALRW. The helical transmembrane segment at 285-307 threads the bilayer; that stretch reads GLTVTTCLAFVNSSANPVIYLLL. The Cytoplasmic portion of the chain corresponds to 308–358; sequence DRSFRARARFGLCARAGRQVRRISSASSLSRDDSSVFRGRSPKVNSASATW. The interval 339–358 is disordered; it reads DDSSVFRGRSPKVNSASATW.

Belongs to the G-protein coupled receptor 1 family.

The protein localises to the membrane. Its function is as follows. Orphan receptor. This Mus musculus (Mouse) protein is Probable G-protein coupled receptor 25 (Gpr25).